The sequence spans 1353 residues: Ankyrin repeat domain-containing protein 36B (1353 aa).

ANK repeat units follow at residues Tyr-19 to Lys-48, Lys-52 to Leu-81, Glu-85 to Ile-114, Phe-118 to Glu-147, Asn-151 to Ala-180, and Leu-184 to Ser-213. 2 disordered regions span residues Pro-249–Val-307 and Met-349–Ser-607. Polar residues predominate over residues Ile-250–Lys-259. Basic and acidic residues-rich tracts occupy residues Gln-260 to Ser-272 and Pro-295 to Ser-306. 2 stretches are compositionally biased toward polar residues: residues Gly-355–Thr-367 and Gly-389–Lys-400. 2 stretches are compositionally biased toward basic and acidic residues: residues Thr-436–Ile-455 and Ser-471–Arg-491. Residues Val-579 to Gln-600 are compositionally biased toward polar residues. Coiled-coil stretches lie at residues Ala-731 to Ser-762, Ile-821 to Glu-908, Ser-937 to Gln-1055, and Val-1119 to Ser-1344.

This sequence belongs to the ANKRD36 family.

In Homo sapiens (Human), this protein is Ankyrin repeat domain-containing protein 36B (ANKRD36B).